Consider the following 148-residue polypeptide: uncharacterized protein (148 aa).

Over residues 65–79 (VDSTPSVDSTGSTSD) the composition is skewed to low complexity. Residues 65–85 (VDSTPSVDSTGSTSDVVDDRG) form a disordered region.

This is an uncharacterized protein from Saccharomyces cerevisiae (strain ATCC 204508 / S288c) (Baker's yeast).